A 208-amino-acid chain; its full sequence is Protein DEHYDRATION-INDUCED 19 homolog 6 (208 aa).

Residues 151-190 are disordered; sequence VDSPRRSEADAEGHGSSSSDDQKRREQGVMDDASKEELEE. 2 stretches are compositionally biased toward basic and acidic residues: residues 153–163 and 170–190; these read SPRRSEADAEG and DDQK…ELEE.

The protein belongs to the Di19 family.

This chain is Protein DEHYDRATION-INDUCED 19 homolog 6 (DI19-6), found in Oryza sativa subsp. japonica (Rice).